Consider the following 161-residue polypeptide: Cell division control protein 31 (161 aa).

EF-hand domains are found at residues 20 to 55 (EQKQ…LGFE), 56 to 91 (LPKR…KILK), 93 to 128 (DPLD…LGET), and 129 to 161 (LTDE…CTDS). Ca(2+)-binding residues include aspartate 33, asparagine 35, aspartate 37, and glutamate 44. A Phosphothreonine modification is found at threonine 130. Ca(2+) is bound by residues aspartate 142, aspartate 144, aspartate 146, glutamate 148, and glutamate 153.

It belongs to the centrin family. Component of the spindle pole body (SPB), acting as the connector of microtubule arrays in the cytoplasm and the nucleoplasm, is involved in nuclear positioning before chromosome segregation, SPB separation, spindle formation, chromosome segregation, nuclear migration into the bud, nuclear reorientation after cytokinesis and nuclear fusion during conjugation. The SPB half-bridge, which is tightly associated with the cytoplasmic side of the nuclear envelope and the SPB, is playing a key role as the starting structure for and in the initiation of SPB duplication in G1. At the SPB half-bridge CDC31 interacts with KAR1, MPS3 and SFI1. Interacts with KIC1. Interacts with VPS13. Associates with nuclear pore complexes (NPCs).

It localises to the nucleus envelope. Its subcellular location is the cytoplasm. It is found in the cytoskeleton. The protein resides in the microtubule organizing center. The protein localises to the spindle pole body. Functions as a component of the spindle pole body (SPB) half-bridge. At the SPB, it is recruited by KAR1 and MPS3 to the SPB half-bridge and involved in the initial steps of SPB duplication. Also involved in connection with the protein kinase KIC1 in the maintenance of cell morphology and integrity. May play a role in vesicle-mediated transport, in a VPS13-dependent manner. The chain is Cell division control protein 31 (CDC31) from Saccharomyces cerevisiae (strain ATCC 204508 / S288c) (Baker's yeast).